The primary structure comprises 211 residues: C-type lectin domain family 2 member L (211 aa).

Residues 1 to 53 (MEPAREPPARARPPPPAARPAPAAPRPRSPAEAEARGPEGLLRRSGSGYEGST) form a disordered region. Pro residues predominate over residues 10–28 (RARPPPPAARPAPAAPRPR). Position 29 is a phosphoserine (Ser29). Residues 66–86 (LLLGAIAVLLFAILVVMSILA) traverse the membrane as a helical segment. Intrachain disulfides connect Cys97–Cys108, Cys125–Cys205, and Cys184–Cys197. Residues 104-206 (YGRKCYYFSE…CLTTRPWVCS (103 aa)) enclose the C-type lectin domain.

The protein localises to the membrane. The polypeptide is C-type lectin domain family 2 member L (Clec2l) (Rattus norvegicus (Rat)).